We begin with the raw amino-acid sequence, 126 residues long: Large ribosomal subunit protein uL22 (126 aa).

The protein belongs to the universal ribosomal protein uL22 family. As to quaternary structure, part of the 50S ribosomal subunit.

In terms of biological role, this protein binds specifically to 23S rRNA; its binding is stimulated by other ribosomal proteins, e.g. L4, L17, and L20. It is important during the early stages of 50S assembly. It makes multiple contacts with different domains of the 23S rRNA in the assembled 50S subunit and ribosome. Functionally, the globular domain of the protein is located near the polypeptide exit tunnel on the outside of the subunit, while an extended beta-hairpin is found that lines the wall of the exit tunnel in the center of the 70S ribosome. The sequence is that of Large ribosomal subunit protein uL22 from Zymomonas mobilis subsp. mobilis (strain ATCC 31821 / ZM4 / CP4).